Here is a 468-residue protein sequence, read N- to C-terminus: ATP synthase subunit beta (468 aa).

An ATP-binding site is contributed by 148–155; sequence GGAGVGKT.

Belongs to the ATPase alpha/beta chains family. F-type ATPases have 2 components, CF(1) - the catalytic core - and CF(0) - the membrane proton channel. CF(1) has five subunits: alpha(3), beta(3), gamma(1), delta(1), epsilon(1). CF(0) has three main subunits: a(1), b(2) and c(9-12). The alpha and beta chains form an alternating ring which encloses part of the gamma chain. CF(1) is attached to CF(0) by a central stalk formed by the gamma and epsilon chains, while a peripheral stalk is formed by the delta and b chains.

It localises to the cell inner membrane. The catalysed reaction is ATP + H2O + 4 H(+)(in) = ADP + phosphate + 5 H(+)(out). Produces ATP from ADP in the presence of a proton gradient across the membrane. The catalytic sites are hosted primarily by the beta subunits. The polypeptide is ATP synthase subunit beta (Xanthomonas euvesicatoria pv. vesicatoria (strain 85-10) (Xanthomonas campestris pv. vesicatoria)).